The sequence spans 465 residues: Sorting nexin-8 (465 aa).

The span at Met1–Glu19 shows a compositional bias: low complexity. Positions Met1–Pro36 are disordered. In terms of domain architecture, PX spans Ala73–Asp181. Arg109, Lys135, and Arg148 together coordinate a 1,2-diacyl-sn-glycero-3-phospho-(1D-myo-inositol-3-phosphate). Phosphothreonine is present on Thr452. Phosphoserine is present on Ser456.

The protein belongs to the sorting nexin family.

It localises to the early endosome membrane. May be involved in several stages of intracellular trafficking. May play a role in intracellular protein transport from early endosomes to the trans-Golgi network. This is Sorting nexin-8 (SNX8) from Homo sapiens (Human).